A 710-amino-acid polypeptide reads, in one-letter code: Polyribonucleotide nucleotidyltransferase (710 aa).

Residues Asp-486 and Asp-492 each contribute to the Mg(2+) site. The KH domain occupies 553–612; the sequence is PRIHTIKISVDKIKDVIGKGGSVIRALTEETGTTIEIEDDGTVKIAATDGDKAKFAIRRI. The S1 motif domain maps to 622–690; sequence GRIYNGKVTR…RQGRVRLSIK (69 aa). Residues 690-710 are disordered; it reads KEAGEQAQPEAEAVPAAPEAE. The span at 694–710 shows a compositional bias: low complexity; the sequence is EQAQPEAEAVPAAPEAE.

This sequence belongs to the polyribonucleotide nucleotidyltransferase family. Component of the RNA degradosome, which is a multiprotein complex involved in RNA processing and mRNA degradation. The cofactor is Mg(2+).

Its subcellular location is the cytoplasm. The catalysed reaction is RNA(n+1) + phosphate = RNA(n) + a ribonucleoside 5'-diphosphate. Functionally, involved in mRNA degradation. Catalyzes the phosphorolysis of single-stranded polyribonucleotides processively in the 3'- to 5'-direction. The polypeptide is Polyribonucleotide nucleotidyltransferase (Erwinia tasmaniensis (strain DSM 17950 / CFBP 7177 / CIP 109463 / NCPPB 4357 / Et1/99)).